The chain runs to 370 residues: Putative agmatine deiminase (370 aa).

The active-site Amidino-cysteine intermediate is C361.

The protein belongs to the agmatine deiminase family.

It catalyses the reaction agmatine + H2O = N-carbamoylputrescine + NH4(+). This Shewanella sp. (strain MR-7) protein is Putative agmatine deiminase.